Consider the following 285-residue polypeptide: Phosphatidylserine decarboxylase proenzyme (285 aa).

Catalysis depends on charge relay system; for autoendoproteolytic cleavage activity residues aspartate 89, histidine 146, and serine 252. The active-site Schiff-base intermediate with substrate; via pyruvic acid; for decarboxylase activity is the serine 252. Serine 252 is subject to Pyruvic acid (Ser); by autocatalysis.

The protein belongs to the phosphatidylserine decarboxylase family. PSD-B subfamily. Prokaryotic type I sub-subfamily. Heterodimer of a large membrane-associated beta subunit and a small pyruvoyl-containing alpha subunit. The cofactor is pyruvate. Post-translationally, is synthesized initially as an inactive proenzyme. Formation of the active enzyme involves a self-maturation process in which the active site pyruvoyl group is generated from an internal serine residue via an autocatalytic post-translational modification. Two non-identical subunits are generated from the proenzyme in this reaction, and the pyruvate is formed at the N-terminus of the alpha chain, which is derived from the carboxyl end of the proenzyme. The autoendoproteolytic cleavage occurs by a canonical serine protease mechanism, in which the side chain hydroxyl group of the serine supplies its oxygen atom to form the C-terminus of the beta chain, while the remainder of the serine residue undergoes an oxidative deamination to produce ammonia and the pyruvoyl prosthetic group on the alpha chain. During this reaction, the Ser that is part of the protease active site of the proenzyme becomes the pyruvoyl prosthetic group, which constitutes an essential element of the active site of the mature decarboxylase.

The protein resides in the cell membrane. It catalyses the reaction a 1,2-diacyl-sn-glycero-3-phospho-L-serine + H(+) = a 1,2-diacyl-sn-glycero-3-phosphoethanolamine + CO2. It functions in the pathway phospholipid metabolism; phosphatidylethanolamine biosynthesis; phosphatidylethanolamine from CDP-diacylglycerol: step 2/2. Functionally, catalyzes the formation of phosphatidylethanolamine (PtdEtn) from phosphatidylserine (PtdSer). In Vibrio campbellii (strain ATCC BAA-1116), this protein is Phosphatidylserine decarboxylase proenzyme.